The sequence spans 157 residues: 6,7-dimethyl-8-ribityllumazine synthase (157 aa).

Residues tryptophan 27, 59–61, and 81–83 each bind 5-amino-6-(D-ribitylamino)uracil; these read AIE and VVI. 86–87 is a binding site for (2S)-2-hydroxy-3-oxobutyl phosphate; sequence ET. Histidine 89 acts as the Proton donor in catalysis. 5-amino-6-(D-ribitylamino)uracil is bound at residue asparagine 114. A (2S)-2-hydroxy-3-oxobutyl phosphate-binding site is contributed by arginine 128.

It belongs to the DMRL synthase family. As to quaternary structure, homopentamer.

It catalyses the reaction (2S)-2-hydroxy-3-oxobutyl phosphate + 5-amino-6-(D-ribitylamino)uracil = 6,7-dimethyl-8-(1-D-ribityl)lumazine + phosphate + 2 H2O + H(+). The protein operates within cofactor biosynthesis; riboflavin biosynthesis; riboflavin from 2-hydroxy-3-oxobutyl phosphate and 5-amino-6-(D-ribitylamino)uracil: step 1/2. Catalyzes the formation of 6,7-dimethyl-8-ribityllumazine by condensation of 5-amino-6-(D-ribitylamino)uracil with 3,4-dihydroxy-2-butanone 4-phosphate. This is the penultimate step in the biosynthesis of riboflavin. The protein is 6,7-dimethyl-8-ribityllumazine synthase of Mycolicibacterium vanbaalenii (strain DSM 7251 / JCM 13017 / BCRC 16820 / KCTC 9966 / NRRL B-24157 / PYR-1) (Mycobacterium vanbaalenii).